The chain runs to 1442 residues: MSNVSPNSMNLNGSTSSTASVNDSGGGGGGGNVTSPTLSSSSASSISNSNSSSSNNLKPSTQPLSSSSTLNTPTQFSLQHSSSSSSLNNTNIDIIEHITISYQDESSIWKYIEAELPNHLPLKNISWKTKTGHTKVVEKMPIEILQYNDERVKAHYDNQNLYKKPYLYLYLVHCDDPDTYKNVVRAKIKQWVTQMTERQQEWLIVYVSLGPKRFSELTSKLTRTVFDRIKNDFNVKRDRCCQLRFLDTNNTSSGNNKDKDNDNGGGSSGTGLSTSTKQQDDLWDDFLIKMKEGIISSAEQYLTTYEDEIRKMDAKRTTPGWSYQNFFFIKEGLALIYERAQLYEDALMQYFELEVLFGDPNNRSQFDQITDEVLQPNSIHCNGNILDTSFKNYRKLIYENKISLFDFKVYLFARQSKLLFLLQKPIEAATKSISFITSMSMIIKQYPNSFAPMFKESWIFSTSMELIKACQDSFDKIVNGAQQQQQQQQQQLQLQQQLQQQQQQQTINGSAQKVVKSISSTTPISKLFGAFGPFGSSSSNTPSSTSATTAANGKNTPMPSNSGIASLSAGGSTIIAGLSGSQSLNNLQSAQLSGALNTQHYIRTPSLNLTSDLSERLTEKQDRESLDFLVGDLLFSSAQRLEELAIIIGYLPVDDYNSEMFFQNVEEVIFKSVENKKIEVDSMTAFSYQPLQVSLQSSKQFTQLYFELLGQIEKLYIQSNRMRSISRLTFAIANLNFKLKEFQIAENLFKSISNLYSREHWSYIEYAVKTRLSYCQKQLGHLVDYVTTCVGLLAPGLLTNRFEKDHYLSEIIQISRKPELNIVQPMIPLFKCKVTFKETVYRYFETIKINVRIKSNLISPIRFNNGAVSFVKSGFGDKLVFQLNDFLVEPGVNNFQFTAVGTTKATFVKDSIWLKIDNLSFGYSLRNADTAIGGGGGGTNTTTTTLPGEIKVIDSESQITLESFANSPLLFYSIQYVGIKLHTHSDTIEAGVLTFTSPTGATIIPTSSVIIIQSDDKTCETSSRTINLINDKLPLSQIGYNQTLEFYLPLMAVNTDTCTHQIRIELQHQKQTKEKFSSSLVSSILFINPLTIDESVINVNNRLFLKTIIQCNSPNMIQFNSYSLEGCDSEYQSPEQQQLQQQLQQQQQLSLSSSSSSISSISSKSSQQPNLYYLVKDHNHSLAPNLNLYPGQLVSLIFEIKKYENESLSSSTSPSSATDSSNSNGNNNNNNNNNNHSKNDLKLKIKYTSKMPQQDLDRPLIRECKSLWRDQNEFSWPIKIELPTYLYQIDLSIQSRAYVGTIVLFEIEITNLKQQQQQQKESNNDNGNEKQQKQQQLQYHIVADSQIWMISGKSKHTFSFNSDTVGEKLKFSCGLIPISSGSLPIPKVTLVGINNSNISYPKTKNEKIFVYPSPQIYSCHQLQDNNNNNNNSINSQTSTNKT.

Over residues 1–23 the composition is skewed to polar residues; sequence MSNVSPNSMNLNGSTSSTASVND. 6 disordered regions span residues 1 to 86, 251 to 277, 535 to 564, 1208 to 1238, 1316 to 1335, and 1422 to 1442; these read MSNV…SSSS, TSSGNNKDKDNDNGGGSSGTGLSTSTK, GSSSSNTPSSTSATTAANGKNTPMPSNSGI, LSSSTSPSSATDSSNSNGNNNNNNNNNNHSK, QQQQKESNNDNGNEKQQKQQ, and LQDNNNNNNNSINSQTSTNKT. Low complexity predominate over residues 39 to 86; the sequence is SSSSASSISNSNSSSSNNLKPSTQPLSSSSTLNTPTQFSLQHSSSSSS. A compositionally biased stretch (low complexity) spans 535–553; it reads GSSSSNTPSSTSATTAANG. Residues 554–564 show a composition bias toward polar residues; it reads KNTPMPSNSGI. Residues 1208–1236 show a composition bias toward low complexity; the sequence is LSSSTSPSSATDSSNSNGNNNNNNNNNNH. A compositionally biased stretch (low complexity) spans 1425-1442; that stretch reads NNNNNNNSINSQTSTNKT.

The protein belongs to the TMEM1 family. Part of the multisubunit TRAPP (transport protein particle) complex.

The protein resides in the golgi apparatus. The protein localises to the cis-Golgi network. Its function is as follows. May play a role in vesicular transport from endoplasmic reticulum to Golgi. This Dictyostelium discoideum (Social amoeba) protein is Trafficking protein particle complex subunit 10 (trapcc10-1).